A 75-amino-acid polypeptide reads, in one-letter code: Exodeoxyribonuclease 7 small subunit (75 aa).

Belongs to the XseB family. In terms of assembly, heterooligomer composed of large and small subunits.

It localises to the cytoplasm. The catalysed reaction is Exonucleolytic cleavage in either 5'- to 3'- or 3'- to 5'-direction to yield nucleoside 5'-phosphates.. In terms of biological role, bidirectionally degrades single-stranded DNA into large acid-insoluble oligonucleotides, which are then degraded further into small acid-soluble oligonucleotides. This Listeria innocua serovar 6a (strain ATCC BAA-680 / CLIP 11262) protein is Exodeoxyribonuclease 7 small subunit.